A 407-amino-acid polypeptide reads, in one-letter code: Aspartokinase (407 aa).

7–10 provides a ligand contact to ATP; it reads KFGG. 25-30 lines the substrate pocket; it reads RVIEEV. Residue Ser-41 participates in ATP binding. Substrate contacts are provided by residues 47 to 49, Glu-74, 125 to 126, 150 to 153, and Ser-153; these read TDE, LD, and RGGS. Residues 173–174 and 179–184 each bind ATP; these read TD and FTTDPR. ACT domains follow at residues 264-338 and 340-407; these read VTVV…LAKV and IVGS…AVRS. Residues 289-291, Gln-295, 351-352, 365-366, and 372-373 each bind substrate; these read NVD, VA, EI, and SE.

This sequence belongs to the aspartokinase family. In terms of assembly, tetramer consisting of 2 isoforms Alpha (catalytic and regulation) and of a homodimer of 2 isoforms Beta (regulation).

The enzyme catalyses L-aspartate + ATP = 4-phospho-L-aspartate + ADP. It functions in the pathway amino-acid biosynthesis; L-lysine biosynthesis via DAP pathway; (S)-tetrahydrodipicolinate from L-aspartate: step 1/4. The protein operates within amino-acid biosynthesis; L-methionine biosynthesis via de novo pathway; L-homoserine from L-aspartate: step 1/3. Its pathway is amino-acid biosynthesis; L-threonine biosynthesis; L-threonine from L-aspartate: step 1/5. Lysine-sensitive. Its function is as follows. Catalyzes the phosphorylation of the beta-carboxyl group of aspartic acid with ATP to yield 4-phospho-L-aspartate, which is involved in the branched biosynthetic pathway leading to the biosynthesis of amino acids threonine, isoleucine and methionine. This is Aspartokinase (lysC) from Geobacillus stearothermophilus (Bacillus stearothermophilus).